A 393-amino-acid polypeptide reads, in one-letter code: NAD(P)H-quinone oxidoreductase subunit H, chloroplastic (393 aa).

Belongs to the complex I 49 kDa subunit family. NDH is composed of at least 16 different subunits, 5 of which are encoded in the nucleus.

The protein resides in the plastid. The protein localises to the chloroplast thylakoid membrane. It carries out the reaction a plastoquinone + NADH + (n+1) H(+)(in) = a plastoquinol + NAD(+) + n H(+)(out). The catalysed reaction is a plastoquinone + NADPH + (n+1) H(+)(in) = a plastoquinol + NADP(+) + n H(+)(out). Functionally, NDH shuttles electrons from NAD(P)H:plastoquinone, via FMN and iron-sulfur (Fe-S) centers, to quinones in the photosynthetic chain and possibly in a chloroplast respiratory chain. The immediate electron acceptor for the enzyme in this species is believed to be plastoquinone. Couples the redox reaction to proton translocation, and thus conserves the redox energy in a proton gradient. The chain is NAD(P)H-quinone oxidoreductase subunit H, chloroplastic from Amborella trichopoda.